A 373-amino-acid polypeptide reads, in one-letter code: Chaperone protein DnaJ (373 aa).

Residues 5-70 enclose the J domain; that stretch reads DFYATLGVAR…EKRAMYDQYG (66 aa). The CR-type zinc finger occupies 134–212; the sequence is GVKKRINIPT…CRGVGRNKAV (79 aa). Zn(2+) contacts are provided by Cys147, Cys150, Cys164, Cys167, Cys186, Cys189, Cys200, and Cys203. CXXCXGXG motif repeat units lie at residues 147 to 154, 164 to 171, 186 to 193, and 200 to 207; these read CDVCNGSG, CPTCKGSG, CPTCRGAG, and CVKCRGVG.

It belongs to the DnaJ family. As to quaternary structure, homodimer. The cofactor is Zn(2+).

The protein resides in the cytoplasm. Its function is as follows. Participates actively in the response to hyperosmotic and heat shock by preventing the aggregation of stress-denatured proteins and by disaggregating proteins, also in an autonomous, DnaK-independent fashion. Unfolded proteins bind initially to DnaJ; upon interaction with the DnaJ-bound protein, DnaK hydrolyzes its bound ATP, resulting in the formation of a stable complex. GrpE releases ADP from DnaK; ATP binding to DnaK triggers the release of the substrate protein, thus completing the reaction cycle. Several rounds of ATP-dependent interactions between DnaJ, DnaK and GrpE are required for fully efficient folding. Also involved, together with DnaK and GrpE, in the DNA replication of plasmids through activation of initiation proteins. The sequence is that of Chaperone protein DnaJ from Neisseria gonorrhoeae (strain ATCC 700825 / FA 1090).